Here is a 215-residue protein sequence, read N- to C-terminus: Adenylate kinase (215 aa).

10 to 15 provides a ligand contact to ATP; sequence GAGKGT. Residues 30 to 59 form an NMP region; that stretch reads STGDMLRAAIKAGTPLGLEAKKIIDEGGLV. Residues threonine 31, arginine 36, 57–59, 85–88, and glutamine 92 each bind AMP; these read GLV and GFPR. An LID region spans residues 122–159; that stretch reads GRRVHLASGRTYHVTYNPPKTEGKDDVTGEDLIQRDDD. ATP is bound by residues arginine 123 and 132–133; that span reads TY. AMP contacts are provided by arginine 156 and arginine 167. An ATP-binding site is contributed by glutamine 200.

It belongs to the adenylate kinase family. As to quaternary structure, monomer.

Its subcellular location is the cytoplasm. The enzyme catalyses AMP + ATP = 2 ADP. The protein operates within purine metabolism; AMP biosynthesis via salvage pathway; AMP from ADP: step 1/1. Functionally, catalyzes the reversible transfer of the terminal phosphate group between ATP and AMP. Plays an important role in cellular energy homeostasis and in adenine nucleotide metabolism. This Neisseria gonorrhoeae (strain ATCC 700825 / FA 1090) protein is Adenylate kinase.